A 153-amino-acid polypeptide reads, in one-letter code: 3-hydroxyacyl-[acyl-carrier-protein] dehydratase FabZ (153 aa).

Histidine 52 is a catalytic residue.

Belongs to the thioester dehydratase family. FabZ subfamily.

It localises to the cytoplasm. The enzyme catalyses a (3R)-hydroxyacyl-[ACP] = a (2E)-enoyl-[ACP] + H2O. In terms of biological role, involved in unsaturated fatty acids biosynthesis. Catalyzes the dehydration of short chain beta-hydroxyacyl-ACPs and long chain saturated and unsaturated beta-hydroxyacyl-ACPs. This is 3-hydroxyacyl-[acyl-carrier-protein] dehydratase FabZ from Magnetococcus marinus (strain ATCC BAA-1437 / JCM 17883 / MC-1).